The sequence spans 240 residues: tRNA pseudouridine synthase B (240 aa).

Residue D54 is the Nucleophile of the active site.

Belongs to the pseudouridine synthase TruB family. Type 1 subfamily.

It carries out the reaction uridine(55) in tRNA = pseudouridine(55) in tRNA. Responsible for synthesis of pseudouridine from uracil-55 in the psi GC loop of transfer RNAs. This Chlorobium phaeovibrioides (strain DSM 265 / 1930) (Prosthecochloris vibrioformis (strain DSM 265)) protein is tRNA pseudouridine synthase B.